Consider the following 332-residue polypeptide: Fructose-1,6-bisphosphatase class 1 (332 aa).

Residues glutamate 91, aspartate 112, leucine 114, and aspartate 115 each coordinate Mg(2+). Residues 115–118, asparagine 208, tyrosine 241, and lysine 271 contribute to the substrate site; that span reads DGSS. Glutamate 277 is a Mg(2+) binding site.

It belongs to the FBPase class 1 family. In terms of assembly, homotetramer. The cofactor is Mg(2+).

The protein resides in the cytoplasm. The enzyme catalyses beta-D-fructose 1,6-bisphosphate + H2O = beta-D-fructose 6-phosphate + phosphate. It participates in carbohydrate biosynthesis; Calvin cycle. In Chlorobium phaeobacteroides (strain DSM 266 / SMG 266 / 2430), this protein is Fructose-1,6-bisphosphatase class 1.